The following is a 122-amino-acid chain: Large ribosomal subunit protein bL19 (122 aa).

The protein belongs to the bacterial ribosomal protein bL19 family.

In terms of biological role, this protein is located at the 30S-50S ribosomal subunit interface and may play a role in the structure and function of the aminoacyl-tRNA binding site. The protein is Large ribosomal subunit protein bL19 of Mycoplasmoides gallisepticum (strain R(low / passage 15 / clone 2)) (Mycoplasma gallisepticum).